Consider the following 856-residue polypeptide: 3-hydroxy-3-methylglutaryl-coenzyme A reductase (856 aa).

The next 4 membrane-spanning stretches (helical) occupy residues 12–32 (FCAS…VCML), 89–109 (ILGI…SSVI), 123–143 (LFFF…QFAL), and 190–210 (VLCC…MTFY). Asn326 carries N-linked (GlcNAc...) asparagine glycosylation. Residues 344 to 364 (SADHIVILILLLALAVKFVFF) form a helical membrane-spanning segment. The linker stretch occupies residues 365–443 (ETRDELTTTR…CEVMALVTSG (79 aa)). N-linked (GlcNAc...) asparagine glycosylation occurs at Asn412. Residues 443–771 (GHIAGYQLEK…SCTMPSIEIG (329 aa)) form a catalytic region. Active-site charge relay system residues include Glu528 and Lys659. Asn700 carries an N-linked (GlcNAc...) asparagine glycan. Asp735 functions as the Charge relay system in the catalytic mechanism. Residue His834 is the Proton donor of the active site. Positions 836–856 (RHNRSSVSTSGSEPSTPACKS) are disordered. The N-linked (GlcNAc...) asparagine glycan is linked to Asn838. The span at 840–856 (SSVSTSGSEPSTPACKS) shows a compositional bias: low complexity.

The protein belongs to the HMG-CoA reductase family.

The protein localises to the endoplasmic reticulum membrane. It catalyses the reaction (R)-mevalonate + 2 NADP(+) + CoA = (3S)-3-hydroxy-3-methylglutaryl-CoA + 2 NADPH + 2 H(+). Its pathway is metabolic intermediate biosynthesis; (R)-mevalonate biosynthesis; (R)-mevalonate from acetyl-CoA: step 3/3. With respect to regulation, the activity of HMG-CoA-reductase is suppressed by exogenous mevalonate. In terms of biological role, synthesis of mevalonate for the production of non-sterol isoprenoids, which are essential for growth differentiation. The sequence is that of 3-hydroxy-3-methylglutaryl-coenzyme A reductase from Blattella germanica (German cockroach).